We begin with the raw amino-acid sequence, 72 residues long: DNA-directed RNA polymerase subunit Rpo10 (72 aa).

Positions 7, 10, 53, and 54 each coordinate Zn(2+).

This sequence belongs to the archaeal Rpo10/eukaryotic RPB10 RNA polymerase subunit family. In terms of assembly, part of the RNA polymerase complex. Zn(2+) is required as a cofactor.

The protein localises to the cytoplasm. The enzyme catalyses RNA(n) + a ribonucleoside 5'-triphosphate = RNA(n+1) + diphosphate. Its function is as follows. DNA-dependent RNA polymerase (RNAP) catalyzes the transcription of DNA into RNA using the four ribonucleoside triphosphates as substrates. In Thermoplasma acidophilum (strain ATCC 25905 / DSM 1728 / JCM 9062 / NBRC 15155 / AMRC-C165), this protein is DNA-directed RNA polymerase subunit Rpo10.